Here is an 840-residue protein sequence, read N- to C-terminus: Aconitase AMT8 (840 aa).

258–260 (DSH) lines the substrate pocket. [4Fe-4S] cluster is bound by residues cysteine 450, cysteine 513, and cysteine 516. Substrate-binding positions include arginine 536, arginine 541, and 709 to 710 (SR).

This sequence belongs to the aconitase/IPM isomerase family.

Its pathway is mycotoxin biosynthesis. Its function is as follows. Aconitase; part of the gene clusters that mediate the biosynthesis of AM-toxins, host-selective toxins (HSTs) causing Alternaria blotch on apple, a worldwide distributed disease. AM-toxins are cyclic depsipeptides containing the 3 residues 2-hydroxy-isovaleric acid (2-HIV), dehydroalanine, L-alanine which are common for all 3 AM-toxins I to III. The fourth precursor is L-alpha-amino-methoxyphenyl-valeric acid (L-Amv) for AM-toxin I, L-alpha-amino-phenyl-valeric acid (L-Apv) for AM-toxin II, and L-alpha-amino-hydroxyphenyl-valeric acid (L-Ahv) for AM-toxin III. AM-toxins have two target sites for affecting susceptible apple cells; they cause invagination of the plasma membrane and electrolyte loss and chloroplast disorganization. The non-ribosomal peptide synthetase AMT1 contains 4 catalytic modules and is responsible for activation of each residue in AM-toxin. The aldo-keto reductase AMT2 catalyzes the conversion of 2-keto-isovaleric acid (2-KIV) to 2-hydroxy-isovaleric acid (2-HIV), one of the precursor residues incorporated by AMT1 during AM-toxin biosynthesis, by reduction of its ketone to an alcohol. The cytochrome P450 monooxygenase AMT3 and the thioesterase AMT4 are also important for AM-toxin production, but their exact function within the AM-toxin biosynthesis are not known yet. Up to 21 proteins (including AMT1 to AMT4) are predicted to be involved in AM-toxin biosynthesis since their expression ishighly up-regulated in AM-toxin-producing cultures. The sequence is that of Aconitase AMT8 from Alternaria alternata (Alternaria rot fungus).